The chain runs to 463 residues: Probable ECA polymerase (463 aa).

The next 11 helical transmembrane spans lie at 6-26 (FGGL…LTWM), 39-59 (FSLL…VLVF), 65-85 (VVPV…YAVY), 112-132 (ANLT…IFFL), 154-174 (GVAL…VYFL), 180-200 (AWLL…VIVG), 201-221 (GTRA…IVRG), 222-242 (WITL…MFWL), 340-360 (LVVM…GLVI), 377-397 (YKAA…IVLT), and 408-428 (VVFF…LYWL).

Belongs to the WzyE family. Probably part of a complex composed of WzxE, WzyE and WzzE.

It localises to the cell inner membrane. Its pathway is bacterial outer membrane biogenesis; enterobacterial common antigen biosynthesis. Its function is as follows. Probably involved in the polymerization of enterobacterial common antigen (ECA) trisaccharide repeat units. This chain is Probable ECA polymerase, found in Pectobacterium atrosepticum (strain SCRI 1043 / ATCC BAA-672) (Erwinia carotovora subsp. atroseptica).